The chain runs to 154 residues: Small ribosomal subunit protein uS13m (154 aa).

The N-terminal 30 residues, 1–30, are a transit peptide targeting the mitochondrion; it reads MLGLRRSATTLFDISQSLLRNVTFHGLRVQ. The segment at 121 to 154 is disordered; that stretch reads RHGLPCRGQRTSTNARTKKGKAVAIAGKKKAPRK. Over residues 136 to 154 the composition is skewed to basic residues; it reads RTKKGKAVAIAGKKKAPRK.

Belongs to the universal ribosomal protein uS13 family. In terms of assembly, part of the small ribosomal subunit.

The protein resides in the mitochondrion. Located at the top of the head of the small subunit, it contacts several helices of the 18S rRNA. This chain is Small ribosomal subunit protein uS13m (RPS13), found in Arabidopsis thaliana (Mouse-ear cress).